The following is a 252-amino-acid chain: Protein GrpE (252 aa).

The span at 1–22 (MHNPQSRGHNLSQAMSDQTVTN) shows a compositional bias: polar residues. Residues 1 to 70 (MHNPQSRGHN…EEDQASEATS (70 aa)) are disordered.

This sequence belongs to the GrpE family. As to quaternary structure, homodimer.

The protein resides in the cytoplasm. Its function is as follows. Participates actively in the response to hyperosmotic and heat shock by preventing the aggregation of stress-denatured proteins, in association with DnaK and GrpE. It is the nucleotide exchange factor for DnaK and may function as a thermosensor. Unfolded proteins bind initially to DnaJ; upon interaction with the DnaJ-bound protein, DnaK hydrolyzes its bound ATP, resulting in the formation of a stable complex. GrpE releases ADP from DnaK; ATP binding to DnaK triggers the release of the substrate protein, thus completing the reaction cycle. Several rounds of ATP-dependent interactions between DnaJ, DnaK and GrpE are required for fully efficient folding. This chain is Protein GrpE, found in Thermosynechococcus vestitus (strain NIES-2133 / IAM M-273 / BP-1).